The sequence spans 962 residues: Vacuolar membrane protease (962 aa).

The Cytoplasmic segment spans residues 1–14 (MLAQFLRSLFRFRK). Residues 15-35 (TTVSVLLVATYVVVFLLNVWD) form a helical membrane-spanning segment. Residues 36 to 359 (RIRYQYSLPE…FVTASTKDLF (324 aa)) lie on the Vacuolar side of the membrane. Asn118 carries an N-linked (GlcNAc...) asparagine glycan. Zn(2+) is bound by residues His153 and Asp165. The active-site Proton acceptor is Glu197. 3 residues coordinate Zn(2+): Glu198, Glu223, and His297. The chain crosses the membrane as a helical span at residues 360–380 (TLNCVVLSVIPVIILVLEFVI). Topologically, residues 381–390 (QRRKTRERNP) are cytoplasmic. The helical transmembrane segment at 391 to 411 (LLVWLRLPFSMFISYLVTATF) threads the bilayer. The Vacuolar portion of the chain corresponds to 412-431 (RSSLFRVNPLIFSRDYVSPT). A helical membrane pass occupies residues 432–452 (IGFSFTFLILNYLVLSLLEYL). Residues 453-460 (APSRDLKT) lie on the Cytoplasmic side of the membrane. Residues 461 to 481 (VSFVELFFGMWIALLWATIRL) traverse the membrane as a helical segment. At 482 to 489 (CTSKYTAT) the chain is on the vacuolar side. The helical transmembrane segment at 490–510 (GVYPITVLYLLMSFGAIVGLV) threads the bilayer. At 511–601 (CSAFKRKHSV…VVSALNYDWS (91 aa)) the chain is on the cytoplasmic side. Polar residues predominate over residues 531–554 (APNTYSSIEESPQQATNTEAPNEN). The segment at 531–563 (APNTYSSIEESPQQATNTEAPNENSPEEHDERA) is disordered. Residues 602-622 (VQFLAVVPLASFFVIMCLSLI) traverse the membrane as a helical segment. Residues 623–639 (LDGIYQTCQEGFQATWN) lie on the Vacuolar side of the membrane. A glycan (N-linked (GlcNAc...) asparagine) is linked at Asn639. The helical transmembrane segment at 640 to 660 (VSKISMLGGMLLAIPVLPFCY) threads the bilayer. Position 661 (Lys661) is a topological domain, cytoplasmic. Residues 662–682 (LNYFVSMVLLFAAASAGIFSF) traverse the membrane as a helical segment. Residues 683-962 (ERAPFTESSP…LVIVNDYIEL (280 aa)) lie on the Vacuolar side of the membrane. N-linked (GlcNAc...) asparagine glycosylation is found at Asn812 and Asn839.

The protein belongs to the peptidase M28 family. The cofactor is Zn(2+).

The protein resides in the vacuole membrane. May be involved in vacuolar sorting and osmoregulation. The chain is Vacuolar membrane protease from Lachancea thermotolerans (strain ATCC 56472 / CBS 6340 / NRRL Y-8284) (Yeast).